Consider the following 503-residue polypeptide: AMP phosphorylase (503 aa).

Residues Gly-168, Ser-194–Ser-199, and Thr-203 contribute to the AMP site. The active-site Proton donor is Asp-256. AMP is bound by residues Ser-264 and Lys-288.

It belongs to the thymidine/pyrimidine-nucleoside phosphorylase family. Type 2 subfamily. As to quaternary structure, forms an exceptionally large macromolecular structure (&gt;40-mers) in solution.

It carries out the reaction AMP + phosphate = alpha-D-ribose 1,5-bisphosphate + adenine. The catalysed reaction is CMP + phosphate = cytosine + alpha-D-ribose 1,5-bisphosphate. It catalyses the reaction UMP + phosphate = alpha-D-ribose 1,5-bisphosphate + uracil. AMP phosphorolysis is allosterically regulated by the substrate AMP. Functionally, catalyzes the conversion of AMP and phosphate to adenine and ribose 1,5-bisphosphate (R15P). Exhibits phosphorylase activity toward CMP, dCMP and UMP in addition to AMP. Functions in an archaeal AMP degradation pathway, together with R15P isomerase and RubisCO. The chain is AMP phosphorylase from Thermococcus kodakarensis (strain ATCC BAA-918 / JCM 12380 / KOD1) (Pyrococcus kodakaraensis (strain KOD1)).